Consider the following 215-residue polypeptide: Adenylate kinase (215 aa).

10-15 (GAGKGT) provides a ligand contact to ATP. The segment at 30–59 (STGDMFRAAMKNNTELGKKAKSFMDNGDLV) is NMP. AMP is bound by residues Thr31, Arg36, 57–59 (DLV), 85–88 (GFPR), and Gln92. Residues 126–163 (GRWICRTCGKTYHEIYNPPKVPGKCDLDGGELYQREDD) are LID. Arg127 contacts ATP. The Zn(2+) site is built by Cys130 and Cys133. Position 136–137 (136–137 (TY)) interacts with ATP. Residues Cys150 and Asp153 each coordinate Zn(2+). Residues Arg160 and Arg171 each contribute to the AMP site. An ATP-binding site is contributed by Gln199.

This sequence belongs to the adenylate kinase family. In terms of assembly, monomer.

It localises to the cytoplasm. The enzyme catalyses AMP + ATP = 2 ADP. The protein operates within purine metabolism; AMP biosynthesis via salvage pathway; AMP from ADP: step 1/1. Catalyzes the reversible transfer of the terminal phosphate group between ATP and AMP. Plays an important role in cellular energy homeostasis and in adenine nucleotide metabolism. This is Adenylate kinase from Listeria innocua serovar 6a (strain ATCC BAA-680 / CLIP 11262).